The chain runs to 193 residues: MFWRKHVRILFTVTLIWQAIHLGKGREKEHEKDVKNFNDTAQKQSPKNSVTIIDAFSDMNQSYQSRKQQNSREFVPFTGITESKNLNRNCCQNGGTCILGAFCACPKHFSGRHCELRKCGSIIHGDWVMKGCWLCRCLYGTLKCLSQNTQDGCELRREEEIIRLYSNGLRLQQTMSALICLLTFLLELCCWQL.

The signal sequence occupies residues 1 to 25 (MFWRKHVRILFTVTLIWQAIHLGKG). N-linked (GlcNAc...) asparagine glycosylation is found at N38 and N60. Intrachain disulfides connect C91-C103 and C105-C114. Residues 91 to 115 (CQNGGTCILGAFCACPKHFSGRHCE) form the EGF-like domain.

This sequence belongs to the EGF-CFC (Cripto-1/FRL1/Cryptic) family.

It localises to the cell membrane. It is found in the secreted. Functionally, may play a role in mesoderm and/or neural patterning during gastrulation. This chain is Cryptic protein (CFC1), found in Gallus gallus (Chicken).